Consider the following 596-residue polypeptide: Aspartate--tRNA(Asp/Asn) ligase (596 aa).

E173 is a binding site for L-aspartate. The interval 197–200 (QLFK) is aspartate. R219 is an L-aspartate binding site. ATP contacts are provided by residues 219-221 (RDE) and Q228. H450 contacts L-aspartate. Residue E485 participates in ATP binding. Residue R492 coordinates L-aspartate. 537 to 540 (GLDR) contacts ATP.

Belongs to the class-II aminoacyl-tRNA synthetase family. Type 1 subfamily. Homodimer.

It localises to the cytoplasm. The enzyme catalyses tRNA(Asx) + L-aspartate + ATP = L-aspartyl-tRNA(Asx) + AMP + diphosphate. Aspartyl-tRNA synthetase with relaxed tRNA specificity since it is able to aspartylate not only its cognate tRNA(Asp) but also tRNA(Asn). Reaction proceeds in two steps: L-aspartate is first activated by ATP to form Asp-AMP and then transferred to the acceptor end of tRNA(Asp/Asn). This Hydrogenovibrio crunogenus (strain DSM 25203 / XCL-2) (Thiomicrospira crunogena) protein is Aspartate--tRNA(Asp/Asn) ligase.